The primary structure comprises 547 residues: Chaperonin GroEL (547 aa).

ATP contacts are provided by residues 30–33 (TLGP), lysine 51, 87–91 (DGTTT), glycine 415, 479–481 (NAA), and aspartate 495. Positions 525–547 (PKEDSPGAGAGMGGMGGMGGMDM) are disordered. Residues 532-547 (AGAGMGGMGGMGGMDM) show a composition bias toward gly residues.

It belongs to the chaperonin (HSP60) family. As to quaternary structure, forms a cylinder of 14 subunits composed of two heptameric rings stacked back-to-back. Interacts with the co-chaperonin GroES.

Its subcellular location is the cytoplasm. The catalysed reaction is ATP + H2O + a folded polypeptide = ADP + phosphate + an unfolded polypeptide.. Functionally, together with its co-chaperonin GroES, plays an essential role in assisting protein folding. The GroEL-GroES system forms a nano-cage that allows encapsulation of the non-native substrate proteins and provides a physical environment optimized to promote and accelerate protein folding. In Nitrosomonas europaea (strain ATCC 19718 / CIP 103999 / KCTC 2705 / NBRC 14298), this protein is Chaperonin GroEL.